Here is a 777-residue protein sequence, read N- to C-terminus: Disintegrin and metalloproteinase domain-containing protein 5 (777 aa).

The first 16 residues, 1–16, serve as a signal peptide directing secretion; it reads MFLVLVLLTGLGRLYA. Residues 17-142 constitute a propeptide that is removed on maturation; sequence GNNPRKTFVQ…VLSGFTHMIY (126 aa). The Extracellular segment spans residues 17-706; sequence GNNPRKTFVQ…RGYVVLSTKR (690 aa). Asn49 and Asn123 each carry an N-linked (GlcNAc...) asparagine glycan. The region spanning 185 to 382 is the Peptidase M12B domain; that stretch reads RYIDMYIVVN…YGLTCLRNTS (198 aa). Cystine bridges form between Cys294–Cys377, Cys336–Cys361, Cys338–Cys343, and Cys456–Cys477. A Disintegrin domain is found at 396-485; it reads RRICGNSIRE…DCVHDTYAQN (90 aa). An N-linked (GlcNAc...) asparagine glycan is attached at Asn566. Positions 633 to 667 constitute an EGF-like domain; that stretch reads NNGSCNAEIHCQGRGICNNLDNCHCHKGFVPPECA. 3 disulfides stabilise this stretch: Cys637–Cys649, Cys643–Cys655, and Cys657–Cys666. The helical transmembrane segment at 707-727 threads the bilayer; sequence FQLIFYIGIPVIIIVAAILIK. Topologically, residues 728 to 777 are cytoplasmic; it reads QNQLGKLFCRGEKEHMSSVSEDGSRSVTLSATESKFPADTEHSNKEEDAQ. Residues 744 to 760 show a composition bias toward polar residues; sequence SSVSEDGSRSVTLSATE. The disordered stretch occupies residues 744-777; sequence SSVSEDGSRSVTLSATESKFPADTEHSNKEEDAQ. A compositionally biased stretch (basic and acidic residues) spans 763 to 777; it reads FPADTEHSNKEEDAQ.

Interacts with TEX101. In terms of processing, subject to proteolytic processing during epididymal transit of spermatozoa. In terms of tissue distribution, detected in testis.

The protein localises to the membrane. Functionally, this is a non catalytic metalloprotease-like protein. May play a role in sperm-egg fusion. This chain is Disintegrin and metalloproteinase domain-containing protein 5 (ADAM5), found in Cavia porcellus (Guinea pig).